A 435-amino-acid polypeptide reads, in one-letter code: 3-phosphoshikimate 1-carboxyvinyltransferase (435 aa).

Residues Lys28, Ser29, and Arg33 each contribute to the 3-phosphoshikimate site. Residue Lys28 coordinates phosphoenolpyruvate. Residues Gly100 and Arg128 each coordinate phosphoenolpyruvate. Positions 173, 175, 321, and 348 each coordinate 3-phosphoshikimate. Gln175 lines the phosphoenolpyruvate pocket. The active-site Proton acceptor is the Asp321. Phosphoenolpyruvate contacts are provided by Arg352 and Arg394.

This sequence belongs to the EPSP synthase family. As to quaternary structure, monomer.

It is found in the cytoplasm. It catalyses the reaction 3-phosphoshikimate + phosphoenolpyruvate = 5-O-(1-carboxyvinyl)-3-phosphoshikimate + phosphate. Its pathway is metabolic intermediate biosynthesis; chorismate biosynthesis; chorismate from D-erythrose 4-phosphate and phosphoenolpyruvate: step 6/7. Its function is as follows. Catalyzes the transfer of the enolpyruvyl moiety of phosphoenolpyruvate (PEP) to the 5-hydroxyl of shikimate-3-phosphate (S3P) to produce enolpyruvyl shikimate-3-phosphate and inorganic phosphate. This is 3-phosphoshikimate 1-carboxyvinyltransferase from Desulfitobacterium hafniense (strain DSM 10664 / DCB-2).